Reading from the N-terminus, the 293-residue chain is Pyridoxal 5'-phosphate synthase subunit PdxS (293 aa).

Residue Asp23 coordinates D-ribose 5-phosphate. The active-site Schiff-base intermediate with D-ribose 5-phosphate is the Lys80. Gly152 contacts D-ribose 5-phosphate. Arg164 provides a ligand contact to D-glyceraldehyde 3-phosphate. D-ribose 5-phosphate is bound by residues Gly213 and Gly234–Ser235.

The protein belongs to the PdxS/SNZ family. In the presence of PdxT, forms a dodecamer of heterodimers.

It catalyses the reaction aldehydo-D-ribose 5-phosphate + D-glyceraldehyde 3-phosphate + L-glutamine = pyridoxal 5'-phosphate + L-glutamate + phosphate + 3 H2O + H(+). Its pathway is cofactor biosynthesis; pyridoxal 5'-phosphate biosynthesis. Catalyzes the formation of pyridoxal 5'-phosphate from ribose 5-phosphate (RBP), glyceraldehyde 3-phosphate (G3P) and ammonia. The ammonia is provided by the PdxT subunit. Can also use ribulose 5-phosphate and dihydroxyacetone phosphate as substrates, resulting from enzyme-catalyzed isomerization of RBP and G3P, respectively. The protein is Pyridoxal 5'-phosphate synthase subunit PdxS of Thermus thermophilus (strain ATCC 27634 / DSM 579 / HB8).